The primary structure comprises 313 residues: Porphobilinogen deaminase (313 aa).

An S-(dipyrrolylmethanemethyl)cysteine modification is found at C242.

Belongs to the HMBS family. In terms of assembly, monomer. It depends on dipyrromethane as a cofactor.

The catalysed reaction is 4 porphobilinogen + H2O = hydroxymethylbilane + 4 NH4(+). Its pathway is porphyrin-containing compound metabolism; protoporphyrin-IX biosynthesis; coproporphyrinogen-III from 5-aminolevulinate: step 2/4. Tetrapolymerization of the monopyrrole PBG into the hydroxymethylbilane pre-uroporphyrinogen in several discrete steps. The polypeptide is Porphobilinogen deaminase (Shigella flexneri).